Consider the following 133-residue polypeptide: Fatty acid-binding protein, heart (133 aa).

Residue V2 is modified to N-acetylvaline. The residue at position 8 (T8) is a Phosphothreonine. At Y20 the chain carries Phosphotyrosine; by Tyr-kinases. Phosphoserine is present on S23. T30 is subject to Phosphothreonine. Residue S83 is modified to Phosphoserine. A (9Z)-octadecenoate-binding site is contributed by 127–129; that stretch reads RTY. 127–129 lines the hexadecanoate pocket; that stretch reads RTY. An octadecanoate-binding site is contributed by 127–129; the sequence is RTY.

The protein belongs to the calycin superfamily. Fatty-acid binding protein (FABP) family.

The protein localises to the cytoplasm. In terms of biological role, FABPs are thought to play a role in the intracellular transport of long-chain fatty acids and their acyl-CoA esters. The sequence is that of Fatty acid-binding protein, heart (FABP3) from Sus scrofa (Pig).